The sequence spans 512 residues: Maturase K (512 aa).

This sequence belongs to the intron maturase 2 family. MatK subfamily.

The protein localises to the plastid. Its subcellular location is the chloroplast. Usually encoded in the trnK tRNA gene intron. Probably assists in splicing its own and other chloroplast group II introns. The polypeptide is Maturase K (Amorphophallus abyssinicus (Black arum)).